Reading from the N-terminus, the 293-residue chain is tRNA-cytidine(32) 2-sulfurtransferase (293 aa).

Residues 62–67 (SGGKDS) carry the PP-loop motif motif. 3 residues coordinate [4Fe-4S] cluster: C137, C140, and C228.

It belongs to the TtcA family. As to quaternary structure, homodimer. Requires Mg(2+) as cofactor. The cofactor is [4Fe-4S] cluster.

The protein resides in the cytoplasm. The enzyme catalyses cytidine(32) in tRNA + S-sulfanyl-L-cysteinyl-[cysteine desulfurase] + AH2 + ATP = 2-thiocytidine(32) in tRNA + L-cysteinyl-[cysteine desulfurase] + A + AMP + diphosphate + H(+). Its pathway is tRNA modification. Functionally, catalyzes the ATP-dependent 2-thiolation of cytidine in position 32 of tRNA, to form 2-thiocytidine (s(2)C32). The sulfur atoms are provided by the cysteine/cysteine desulfurase (IscS) system. The sequence is that of tRNA-cytidine(32) 2-sulfurtransferase from Brucella suis (strain ATCC 23445 / NCTC 10510).